The chain runs to 238 residues: NADH-quinone oxidoreductase subunit I (238 aa).

2 consecutive 4Fe-4S ferredoxin-type domains span residues 81-111 and 123-152; these read LVPREDGRARCVACYMCATACPAQCIYIEAG and VKFVIDELRCIVCGFCVEACPKDAIRMDSG. Residues cysteine 91, cysteine 94, cysteine 97, cysteine 101, cysteine 132, cysteine 135, cysteine 138, and cysteine 142 each coordinate [4Fe-4S] cluster.

It belongs to the complex I 23 kDa subunit family. As to quaternary structure, NDH-1 is composed of 14 different subunits. Subunits NuoA, H, J, K, L, M, N constitute the membrane sector of the complex. It depends on [4Fe-4S] cluster as a cofactor.

The protein localises to the cell inner membrane. The enzyme catalyses a quinone + NADH + 5 H(+)(in) = a quinol + NAD(+) + 4 H(+)(out). In terms of biological role, NDH-1 shuttles electrons from NADH, via FMN and iron-sulfur (Fe-S) centers, to quinones in the respiratory chain. The immediate electron acceptor for the enzyme in this species is believed to be ubiquinone. Couples the redox reaction to proton translocation (for every two electrons transferred, four hydrogen ions are translocated across the cytoplasmic membrane), and thus conserves the redox energy in a proton gradient. The polypeptide is NADH-quinone oxidoreductase subunit I (Anaeromyxobacter sp. (strain Fw109-5)).